Reading from the N-terminus, the 462-residue chain is Glycine--tRNA ligase (462 aa).

The substrate site is built by arginine 98 and glutamate 174. Residues 206-208, 216-221, 290-291, and 334-337 each bind ATP; these read RNE, FRTREF, EL, and GADR. Residue 221-225 coordinates substrate; that stretch reads FEQME. Residue 330-334 participates in substrate binding; the sequence is EPSLG.

It belongs to the class-II aminoacyl-tRNA synthetase family. Homodimer.

It is found in the cytoplasm. It carries out the reaction tRNA(Gly) + glycine + ATP = glycyl-tRNA(Gly) + AMP + diphosphate. Functionally, catalyzes the attachment of glycine to tRNA(Gly). The protein is Glycine--tRNA ligase of Lachnospira eligens (strain ATCC 27750 / DSM 3376 / VPI C15-48 / C15-B4) (Eubacterium eligens).